The chain runs to 147 residues: Flagellar assembly factor FliW (147 aa).

This sequence belongs to the FliW family. As to quaternary structure, interacts with translational regulator CsrA and flagellin(s).

The protein resides in the cytoplasm. In terms of biological role, acts as an anti-CsrA protein, binds CsrA and prevents it from repressing translation of its target genes, one of which is flagellin. Binds to flagellin and participates in the assembly of the flagellum. The polypeptide is Flagellar assembly factor FliW (Oceanobacillus iheyensis (strain DSM 14371 / CIP 107618 / JCM 11309 / KCTC 3954 / HTE831)).